The primary structure comprises 691 residues: MSRSTPLKKVRNIGIAAHIDAGKTTTSERILFFTGMSHKIGEVHDGAATMDWMEQEKERGITITSAATTCFWKDHQINLIDTPGHVDFTIEVERSMRVLDGAVAVFCSVGGVQPQSETVWRQANKYGVPRIVFVNKMDRIGANFYNVEDQIRNRLKANPVPLQIPIGAEDNFKGVIDLVTMKALVWEDDTKPTDYVEKEIPAELKEKAEEYRTKMIEAVSETSDELMEKYLGGEELSLEEIKTGIKAGCLSLSIVPMLCGTAFKNKGVQPLLDAVVAYLPAPDEVANIKGEYEDGTEVSVKSTDDGEFAGLAFKIMTDPFVGQLTFVRVYRGCLESGSYAYNSTKDKKERIGRLLKMHSNKREEIKVLYAGEIGAVVGLKDTLTGDTLASEKDKVILERMDFPDPVISVAVEPKTKADQEKMSIALNKLAQEDPSFRVSTDEESGQTIISGMGELHLEIIVDRMLREFKVEAEVGQPQVAYRETIRKTVEQEYKYAKQSGGRGQYGHVFLRLEPLEPGSGYEFVNDIKGGVIPKEYIPAVDKGVQEALQNGVLAGYPVEDVKVTVYDGSYHEVDSSEMAFKLAASMGFKEGARKAGAVILEPMMKVEVETPEDYMGDVIGDLNKRRGQVNSMDERGGNKIITAFCPLAEMFGYSTDLRSQTQGRATYSMEFDHYDEVPKNVADEIIKKRNG.

The 276-residue stretch at 8–283 folds into the tr-type G domain; that stretch reads KKVRNIGIAA…AVVAYLPAPD (276 aa). GTP contacts are provided by residues 17-24, 81-85, and 135-138; these read AHIDAGKT, DTPGH, and NKMD.

This sequence belongs to the TRAFAC class translation factor GTPase superfamily. Classic translation factor GTPase family. EF-G/EF-2 subfamily.

The protein localises to the cytoplasm. Functionally, catalyzes the GTP-dependent ribosomal translocation step during translation elongation. During this step, the ribosome changes from the pre-translocational (PRE) to the post-translocational (POST) state as the newly formed A-site-bound peptidyl-tRNA and P-site-bound deacylated tRNA move to the P and E sites, respectively. Catalyzes the coordinated movement of the two tRNA molecules, the mRNA and conformational changes in the ribosome. The sequence is that of Elongation factor G from Campylobacter jejuni subsp. jejuni serotype O:6 (strain 81116 / NCTC 11828).